Consider the following 179-residue polypeptide: Caveolin-1 (179 aa).

N-acetylserine is present on S2. At S2 the chain carries Phosphoserine. The segment at 2 to 95 is required for homooligomerization; sequence SGGKYVDSEG…WKASFTTFTV (94 aa). Over 2-105 the chain is Cytoplasmic; that stretch reads SGGKYVDSEG…TKYWFYRLLS (104 aa). K5 carries the N6-acetyllysine; alternate modification. A Glycyl lysine isopeptide (Lys-Gly) (interchain with G-Cter in ubiquitin); alternate cross-link involves residue K5. Y6 is subject to Phosphotyrosine. At S9 the chain carries Phosphoserine. Phosphotyrosine; by ABL1 is present on Y14. Residue Y25 is modified to Phosphotyrosine. Glycyl lysine isopeptide (Lys-Gly) (interchain with G-Cter in ubiquitin) cross-links involve residues K26 and K30. Phosphoserine is present on S37. Glycyl lysine isopeptide (Lys-Gly) (interchain with G-Cter in ubiquitin) cross-links involve residues K39, K48, and K58. Residues 83 to 95 are interaction with CAVIN3; that stretch reads DGIWKASFTTFTV. Positions 106–126 form an intramembrane region, helical; sequence ALFGIPMALIWGIYFAILSFL. The Cytoplasmic portion of the chain corresponds to 127-179; sequence HIWAVVPCIKSFLIEIQCISRVYSIYVHTFCDPLFEAIGKVFSNIRINMQKEI. The interacts with SPRY1, SPRY2, SPRY3 and SPRY4 stretch occupies residues 132-143; it reads VPCIKSFLIEIQ. S-palmitoyl cysteine attachment occurs at residues C134, C144, and C157. The tract at residues 150–161 is interacts with SPRY1, SPRY2, and SPRY4; that stretch reads SIYVHTFCDPLF. The tract at residues 168 to 179 is interacts with SPRY1, SPRY2, SPRY3 and SPRY4; sequence FSNIRINMQKEI.

It belongs to the caveolin family. As to quaternary structure, homooligomer. Interacts with GLIPR2. Interacts with NOSTRIN. Interacts with SNAP25 and STX1A. Interacts (via the N-terminus) with DPP4; the interaction is direct. Interacts with CTNNB1, CDH1 and JUP. Interacts with PACSIN2; this interaction induces membrane tubulation. Interacts with SLC7A9. Interacts with BMX and BTK. Interacts with TGFBR1. Interacts with CAVIN3 (via leucine-zipper domain) in a cholesterol-sensitive manner. Interacts with CAVIN1. Interacts with EHD2 in a cholesterol-dependent manner. Forms a ternary complex with UBXN6 and VCP; mediates CAV1 targeting to lysosomes for degradation. Interacts with ABCG1; this interaction regulates ABCG1-mediated cholesterol efflux. Interacts with NEU3; this interaction enhances NEU3 sialidase activity within caveola. Interacts (via C-terminus) with SPRY1, SPRY2 (via C-terminus), SPRY3, and SPRY4. Interacts with IGFBP5; this interaction allows trafficking of IGFBP5 from the plasma membrane to the nucleus. In terms of processing, phosphorylated at Tyr-14 by ABL1 in response to oxidative stress. Post-translationally, ubiquitinated. Undergo monoubiquitination and multi- and/or polyubiquitination. Monoubiquitination of N-terminal lysines promotes integration in a ternary complex with UBXN6 and VCP which promotes oligomeric CAV1 targeting to lysosomes for degradation. Ubiquitinated by ZNRF1; leading to degradation and modulation of the TLR4-mediated immune response.

Its subcellular location is the golgi apparatus membrane. It localises to the cell membrane. The protein resides in the membrane. The protein localises to the caveola. It is found in the membrane raft. May act as a scaffolding protein within caveolar membranes. Forms a stable heterooligomeric complex with CAV2 that targets to lipid rafts and drives caveolae formation. Mediates the recruitment of CAVIN proteins (CAVIN1/2/3/4) to the caveolae. Interacts directly with G-protein alpha subunits and can functionally regulate their activity. Involved in the costimulatory signal essential for T-cell receptor (TCR)-mediated T-cell activation. Its binding to DPP4 induces T-cell proliferation and NF-kappa-B activation in a T-cell receptor/CD3-dependent manner. Recruits CTNNB1 to caveolar membranes and may regulate CTNNB1-mediated signaling through the Wnt pathway. Negatively regulates TGFB1-mediated activation of SMAD2/3 by mediating the internalization of TGFBR1 from membrane rafts leading to its subsequent degradation. Binds 20(S)-hydroxycholesterol (20(S)-OHC). This is Caveolin-1 (CAV1) from Eulemur macaco macaco (Black lemur).